A 354-amino-acid polypeptide reads, in one-letter code: MGCTLSAEDKAAVERSKMIDRNLREDGEKAAREVKLLLLGAGESGKSTIVKQMKIIHEAGYSEEECKQYKAVVYSNTIQSIIAIIRAMGRLKIDFGDPSRADDARQLFVLAGAAEEGFMTAELAGVIKRLWKDGGVQACFNRSREYQLNDSAAYYLNDLDRIAQNSYIPTQQDVLRTRVKTTGIVETHFTFKDLHFKMFDVGGQRSERKKWIHCFEGVTAIIFCVALSDYDLVLAEDEEMNRMHESMKLFDSICNNKWFTDTSIILFLNKKDLFEEKIKRSPLTICYPEYPGSNTYEEAAAYIQCQFEDLNKRKDTKEIYTHFTCATDTKNVQFVFDAVTDVIIKNNLKDCGLF.

G2 carries the N-myristoyl glycine lipid modification. C3 carries S-palmitoyl cysteine lipidation. Residues 32-354 enclose the G-alpha domain; sequence REVKLLLLGA…KNNLKDCGLF (323 aa). Residues 35-48 form a G1 motif region; sequence KLLLLGAGESGKST. GTP contacts are provided by residues 43–48, 150–151, and 175–178; these read ESGKST, DS, and LRTR. Position 47 (S47) interacts with Mg(2+). A G2 motif region spans residues 173 to 181; the sequence is DVLRTRVKT. Mg(2+) is bound at residue T181. The G3 motif stretch occupies residues 196 to 205; sequence FKMFDVGGQR. Residues 200-204, 269-272, and A326 contribute to the GTP site; these read DVGGQ and NKKD. The tract at residues 265–272 is G4 motif; that stretch reads ILFLNKKD. The tract at residues 324-329 is G5 motif; that stretch reads TCATDT.

It belongs to the G-alpha family. G(i/o/t/z) subfamily. As to quaternary structure, heterotrimeric G proteins are composed of 3 units; alpha, beta and gamma. The alpha chain contains the guanine nucleotide binding site. Part of a spindle orientation complex. Identified in complex with the beta subunit GNB1 and the gamma subunit GNG1. Identified in complex with the beta subunit GNB1 and the gamma subunit GNG2. GTP binding causes dissociation of the heterotrimer, liberating the individual subunits so that they can interact with downstream effector proteins. In terms of processing, myristoylation at Gly-2 is required for membrane anchoring before palmitoylation. Post-translationally, palmitoylation at Cys-3 varies with membrane lipid composition.

The protein resides in the nucleus. The protein localises to the cytoplasm. It localises to the cell membrane. Its subcellular location is the cytoskeleton. It is found in the microtubule organizing center. The protein resides in the centrosome. The protein localises to the cell cortex. It localises to the membrane. The enzyme catalyses GTP + H2O = GDP + phosphate + H(+). In terms of biological role, guanine nucleotide-binding proteins (G proteins) function as transducers downstream of G protein-coupled receptors (GPCRs) in numerous signaling cascades. The alpha chain contains the guanine nucleotide binding site and alternates between an active, GTP-bound state and an inactive, GDP-bound state. Signaling by an activated GPCR promotes GDP release and GTP binding. The alpha subunit has a low GTPase activity that converts bound GTP to GDP, thereby terminating the signal. Both GDP release and GTP hydrolysis are modulated by numerous regulatory proteins. Signaling is mediated via effector proteins, such as adenylate cyclase. Inhibits adenylate cyclase activity, leading to decreased intracellular cAMP levels. Required for cortical dynein-dynactin complex recruitment during metaphase. This Xenopus laevis (African clawed frog) protein is Guanine nucleotide-binding protein G(i) subunit alpha-1 (gnai1).